The following is a 220-amino-acid chain: U1 small nuclear ribonucleoprotein C (220 aa).

The segment at 4-36 adopts a Matrin-type zinc-finger fold; it reads FFCDYCDVYLTHDSISVRKAHNSGRNHLRNVVD. The disordered stretch occupies residues 197–220; the sequence is PLGGFPAGAPLPGAPPGYGPPGAK. Pro residues predominate over residues 208–220; the sequence is PGAPPGYGPPGAK.

This sequence belongs to the U1 small nuclear ribonucleoprotein C family. As to quaternary structure, U1 snRNP is composed of the 7 core Sm proteins B/B', D1, D2, D3, E, F and G that assemble in a heptameric protein ring on the Sm site of the small nuclear RNA to form the core snRNP, and at least 3 U1 snRNP-specific proteins U1-70K, U1-A and U1-C. U1-C interacts with U1 snRNA and the 5' splice-site region of the pre-mRNA.

It is found in the nucleus. Its function is as follows. Component of the spliceosomal U1 snRNP, which is essential for recognition of the pre-mRNA 5' splice-site and the subsequent assembly of the spliceosome. U1-C is directly involved in initial 5' splice-site recognition for both constitutive and regulated alternative splicing. The interaction with the 5' splice-site seems to precede base-pairing between the pre-mRNA and the U1 snRNA. Stimulates commitment or early (E) complex formation by stabilizing the base pairing of the 5' end of the U1 snRNA and the 5' splice-site region. The sequence is that of U1 small nuclear ribonucleoprotein C from Tuber melanosporum (strain Mel28) (Perigord black truffle).